A 401-amino-acid chain; its full sequence is 2-amino-3-carboxymuconate-6-semialdehyde decarboxylase (401 aa).

The Zn(2+) site is built by histidine 18 and histidine 20. Arginine 59 provides a ligand contact to substrate. Zn(2+) is bound by residues histidine 234 and aspartate 352.

The protein belongs to the metallo-dependent hydrolases superfamily. ACMSD family. Monomer.

It carries out the reaction 2-amino-3-carboxymuconate 6-semialdehyde + H(+) = 2-aminomuconate 6-semialdehyde + CO2. It participates in secondary metabolite metabolism; quinolate metabolism. Functionally, converts alpha-amino-beta-carboxymuconate-epsilon-semialdehyde (ACMS) to alpha-aminomuconate semialdehyde (AMS). This is 2-amino-3-carboxymuconate-6-semialdehyde decarboxylase from Caenorhabditis elegans.